A 251-amino-acid polypeptide reads, in one-letter code: WUSCHEL-related homeobox 4 (251 aa).

Disordered regions lie at residues 1 to 21 (MKVH…DSTS) and 33 to 93 (LAPK…RWNP). Positions 11–21 (SSSWDQHDSTS) are enriched in low complexity. A compositionally biased stretch (basic and acidic residues) spans 71 to 83 (KFEHKRDPPHQLE). A DNA-binding region (homeobox; WUS-type) is located at residues 86–150 (PGGTRWNPTQ…NHKARERQKQ (65 aa)).

It belongs to the WUS homeobox family. In terms of tissue distribution, expressed in the vasculature of the whole plant (roots, hypocotyls, cotyledons and leaves), trichomes and stomata. Expresse in the developing vascular bundles of root and shoot lateral organs.

The protein resides in the nucleus. Its function is as follows. Promotes differentiation and/or maintenance of the vascular procambium, the initial cells of the developing vasculature. Part of the TDIF-TDR-WOX4 signaling pathway that plays a crucial role in the maintenance of the vascular meristem organization during secondary growth. Is required for promoting the proliferation of procambial/cambial stem cells but not for repressing their commitment to xylem differentiation in response to the TDIF signal. Acts redundantly with WOX14 downstream of the TDR/PXY receptor kinase to regulate procambial cell proliferation and differentiation in vascular tissue, independently of any role in vascular. Acts as a cambium regulator in the inflorescence stem. Is required for auxin-dependent cambium stimulation in the inflorescence stem. The polypeptide is WUSCHEL-related homeobox 4 (WOX4) (Arabidopsis thaliana (Mouse-ear cress)).